The primary structure comprises 187 residues: UPF0301 protein VSAL_I0547 (187 aa).

Belongs to the UPF0301 (AlgH) family.

In Aliivibrio salmonicida (strain LFI1238) (Vibrio salmonicida (strain LFI1238)), this protein is UPF0301 protein VSAL_I0547.